A 139-amino-acid chain; its full sequence is Large ribosomal subunit protein uL16 (139 aa).

It belongs to the universal ribosomal protein uL16 family. As to quaternary structure, part of the 50S ribosomal subunit.

In terms of biological role, binds 23S rRNA and is also seen to make contacts with the A and possibly P site tRNAs. This Neorickettsia sennetsu (strain ATCC VR-367 / Miyayama) (Ehrlichia sennetsu) protein is Large ribosomal subunit protein uL16 (rplP).